A 240-amino-acid polypeptide reads, in one-letter code: NKG2-E type II integral membrane protein (240 aa).

The span at 1–12 (MSKQRGTFSEVS) shows a compositional bias: polar residues. Residues 1-31 (MSKQRGTFSEVSLAQDPKWQQRKPKGNKSSI) are disordered. The Cytoplasmic portion of the chain corresponds to 1–70 (MSKQRGTFSE…CQGLLPPPEK (70 aa)). The helical; Signal-anchor for type II membrane protein transmembrane segment at 71–93 (LTAEVLGIICIVLMATVLKTIVL) threads the bilayer. The Extracellular portion of the chain corresponds to 94–240 (IPFLEQNNSS…IMLTRLVLNS (147 aa)). N100 is a glycosylation site (N-linked (GlcNAc...) asparagine). Residues 116 to 230 (HCPEEWITYS…GSSRIIRRGF (115 aa)) form the C-type lectin domain. C117 and C128 are oxidised to a cystine. Residues N149 and N179 are each glycosylated (N-linked (GlcNAc...) asparagine). C207 and C220 form a disulfide bridge.

In terms of assembly, can form disulfide-bonded heterodimer with CD94. In terms of tissue distribution, natural killer cells.

The protein resides in the membrane. In terms of biological role, plays a role as a receptor for the recognition of MHC class I HLA-E molecules by NK cells and some cytotoxic T-cells. The chain is NKG2-E type II integral membrane protein (KLRC3) from Homo sapiens (Human).